A 74-amino-acid chain; its full sequence is MRGLCICLVFLLVCGLVSATAAAPAESEVAHLRVRRGFGCPLNQGACHNHCRSIRRRGGYCSGIIKQTCTCYRN.

The signal sequence occupies residues 1–22 (MRGLCICLVFLLVCGLVSATAA). Residues 23-36 (APAESEVAHLRVRR) constitute a propeptide that is removed on maturation. Intrachain disulfides connect Cys-40-Cys-61, Cys-47-Cys-69, and Cys-51-Cys-71.

Hemolymph.

The protein localises to the secreted. Functionally, antibacterial activity against Gram-positive and Gram-negative bacteria. The protein is Defensin (VSNA1) of Dermacentor variabilis (American dog tick).